Here is an 81-residue protein sequence, read N- to C-terminus: Cytotoxin 5b (81 aa).

A signal peptide spans 1–21 (MKTLLLTLLVVTIVCLDLGYT). 4 disulfides stabilise this stretch: C24/C42, C35/C59, C63/C74, and C75/C80.

This sequence belongs to the three-finger toxin family. Short-chain subfamily. Type IA cytotoxin sub-subfamily. Monomer in solution; Homodimer and oligomer in the presence of negatively charged lipids forming a pore with a size ranging between 20 and 30 Angstroms. In terms of tissue distribution, expressed by the venom gland.

The protein localises to the secreted. Its subcellular location is the target cell membrane. Shows cytolytic activity on many different cells by forming pore in lipid membranes. In vivo, increases heart rate or kills the animal by cardiac arrest. In addition, it binds to heparin with high affinity, interacts with Kv channel-interacting protein 1 (KCNIP1) in a calcium-independent manner, and binds to integrin alpha-V/beta-3 (ITGAV/ITGB3) with moderate affinity. This chain is Cytotoxin 5b, found in Naja sputatrix (Malayan spitting cobra).